The chain runs to 192 residues: Ion-translocating oxidoreductase complex subunit B (192 aa).

Residues 1-26 form a hydrophobic region; sequence MNAFWIAVAAVSLLGLAFGAILGYAS. Residues 32–91 enclose the 4Fe-4S domain; that stretch reads EDDPVVEKIDEILPQSQCGQCGYPGCRPYAEAISCNGEKINRCAPGGEAVMLKIAELLNV. [4Fe-4S] cluster-binding residues include Cys-49, Cys-52, Cys-57, Cys-74, Cys-117, Cys-120, Cys-123, Cys-127, Cys-147, Cys-150, Cys-153, and Cys-157. 4Fe-4S ferredoxin-type domains are found at residues 108 to 137 and 138 to 167; these read MVAV…GATR and AMHT…LQPV.

The protein belongs to the 4Fe4S bacterial-type ferredoxin family. RnfB subfamily. The complex is composed of six subunits: RsxA, RsxB, RsxC, RsxD, RsxE and RsxG. It depends on [4Fe-4S] cluster as a cofactor.

It is found in the cell inner membrane. Functionally, part of a membrane-bound complex that couples electron transfer with translocation of ions across the membrane. Required to maintain the reduced state of SoxR. The protein is Ion-translocating oxidoreductase complex subunit B of Escherichia coli O6:H1 (strain CFT073 / ATCC 700928 / UPEC).